The following is an 888-amino-acid chain: Mitogen-activated protein kinase kinase kinase 12 (888 aa).

Positions 26 to 42 are enriched in basic and acidic residues; sequence MRKLDPDTSDCTPEKDL. Residues 26–104 are disordered; sequence MRKLDPDTSD…TGSPESRASR (79 aa). Phosphothreonine occurs at positions 37 and 43. Residues 64–75 show a composition bias toward pro residues; it reads SPSPGGEPPPEP. The Protein kinase domain maps to 158–399; that stretch reads ILDLQWVGSG…FRQILLHLDI (242 aa). ATP contacts are provided by residues 164-172 and lysine 185; that span reads VGSGAQGAV. Catalysis depends on aspartate 269, which acts as the Proton acceptor. Leucine-zipper stretches follow at residues 423–444 and 476–497; these read VKLH…EEEL and LNAL…EQAL. Residues 557–620 form a disordered region; sequence GVGLPGCPKA…GGLGVGPTAW (64 aa). Over residues 572–584 the composition is skewed to basic residues; it reads RSRRGKTRHRKAS. The segment covering 605–615 has biased composition (gly residues); sequence GGLGSPGGLGV. The residue at position 640 (serine 640) is a Phosphoserine. Disordered stretches follow at residues 654–731 and 743–888; these read RGRG…YQHL and TRSQ…SLPP. A compositionally biased stretch (gly residues) spans 704–725; the sequence is PGEGVGLLGTGREGTTGRGGSR. Residues 752 to 763 are compositionally biased toward acidic residues; that stretch reads SEEEEGEVDSEV. Composition is skewed to polar residues over residues 776–789 and 798–812; these read NMRQ…SENP and SEPS…GSTN. Residues 813 to 823 are compositionally biased toward basic and acidic residues; that stretch reads TDERPDERSDD.

It belongs to the protein kinase superfamily. STE Ser/Thr protein kinase family. MAP kinase kinase kinase subfamily. Homodimer. Interacts with MBIP. It depends on Mg(2+) as a cofactor. Post-translationally, autophosphorylated on Ser/Thr. Phosphorylated in cytosol under basal conditions and dephosphorylated when membrane-associated. The activity of MAP3K12 can be regulated through its proteasomal degradation. APOE, through a receptor-mediated mechanism, activates MAP3K12 by preventing its proteasomal degradation.

It is found in the cytoplasm. It localises to the cell membrane. The catalysed reaction is L-seryl-[protein] + ATP = O-phospho-L-seryl-[protein] + ADP + H(+). The enzyme catalyses L-threonyl-[protein] + ATP = O-phospho-L-threonyl-[protein] + ADP + H(+). In terms of biological role, part of a non-canonical MAPK signaling pathway. Activated by APOE, enhances the AP-1-mediated transcription of APP, via a MAP kinase signal transduction pathway composed of MAP2K7 and MAPK1/ERK2 and MAPK3/ERK1. May be an activator of the JNK/SAPK pathway. This Rattus norvegicus (Rat) protein is Mitogen-activated protein kinase kinase kinase 12 (Map3k12).